A 409-amino-acid chain; its full sequence is Argininosuccinate synthase (409 aa).

10–18 (AYSGGLDTS) contributes to the ATP binding site. An L-citrulline-binding site is contributed by tyrosine 87. Glycine 117 contributes to the ATP binding site. 3 residues coordinate L-aspartate: threonine 119, asparagine 123, and aspartate 124. Asparagine 123 contacts L-citrulline. Positions 127, 175, 184, 260, and 272 each coordinate L-citrulline.

It belongs to the argininosuccinate synthase family. Type 1 subfamily. In terms of assembly, homotetramer.

Its subcellular location is the cytoplasm. The catalysed reaction is L-citrulline + L-aspartate + ATP = 2-(N(omega)-L-arginino)succinate + AMP + diphosphate + H(+). The protein operates within amino-acid biosynthesis; L-arginine biosynthesis; L-arginine from L-ornithine and carbamoyl phosphate: step 2/3. This chain is Argininosuccinate synthase, found in Rubrobacter xylanophilus (strain DSM 9941 / JCM 11954 / NBRC 16129 / PRD-1).